A 274-amino-acid chain; its full sequence is Acetyl-coenzyme A carboxylase carboxyl transferase subunit beta (274 aa).

The CoA carboxyltransferase N-terminal domain maps to Ile18 to Phe274. 4 residues coordinate Zn(2+): Cys22, Cys25, Cys41, and Cys44. A C4-type zinc finger spans residues Cys22 to Cys44.

It belongs to the AccD/PCCB family. Acetyl-CoA carboxylase is a heterohexamer composed of biotin carboxyl carrier protein (AccB), biotin carboxylase (AccC) and two subunits each of ACCase subunit alpha (AccA) and ACCase subunit beta (AccD). Zn(2+) is required as a cofactor.

Its subcellular location is the cytoplasm. It carries out the reaction N(6)-carboxybiotinyl-L-lysyl-[protein] + acetyl-CoA = N(6)-biotinyl-L-lysyl-[protein] + malonyl-CoA. Its pathway is lipid metabolism; malonyl-CoA biosynthesis; malonyl-CoA from acetyl-CoA: step 1/1. Functionally, component of the acetyl coenzyme A carboxylase (ACC) complex. Biotin carboxylase (BC) catalyzes the carboxylation of biotin on its carrier protein (BCCP) and then the CO(2) group is transferred by the transcarboxylase to acetyl-CoA to form malonyl-CoA. The protein is Acetyl-coenzyme A carboxylase carboxyl transferase subunit beta of Endomicrobium trichonymphae.